The chain runs to 426 residues: Enolase 2 (426 aa).

Gln-163 contacts (2R)-2-phosphoglycerate. Residue Glu-205 is the Proton donor of the active site. The Mg(2+) site is built by Asp-242, Glu-285, and Asp-312. (2R)-2-phosphoglycerate contacts are provided by Lys-337, Arg-366, Ser-367, and Lys-388. Residue Lys-337 is the Proton acceptor of the active site.

It belongs to the enolase family. The cofactor is Mg(2+).

It is found in the cytoplasm. Its subcellular location is the secreted. It localises to the cell surface. It catalyses the reaction (2R)-2-phosphoglycerate = phosphoenolpyruvate + H2O. Its pathway is carbohydrate degradation; glycolysis; pyruvate from D-glyceraldehyde 3-phosphate: step 4/5. Its function is as follows. Catalyzes the reversible conversion of 2-phosphoglycerate (2-PG) into phosphoenolpyruvate (PEP). It is essential for the degradation of carbohydrates via glycolysis. The protein is Enolase 2 of Methanospirillum hungatei JF-1 (strain ATCC 27890 / DSM 864 / NBRC 100397 / JF-1).